A 63-amino-acid polypeptide reads, in one-letter code: High-potential iron-sulfur protein (63 aa).

[4Fe-4S] cluster-binding residues include Cys23, Cys26, Cys41, and Cys56.

It belongs to the high-potential iron-sulfur protein (HiPIP) family. As to quaternary structure, homodimer.

Its function is as follows. Specific class of high-redox-potential 4Fe-4S ferredoxins. Functions in anaerobic electron transport in most purple and in some other photosynthetic bacteria and in at least one genus (Paracoccus) of halophilic, denitrifying bacteria. The polypeptide is High-potential iron-sulfur protein (hip) (Rhodocyclus tenuis (Rhodospirillum tenue)).